The primary structure comprises 879 residues: Levansucrase (879 aa).

The first 37 residues, Met1–Ala37, serve as a signal peptide directing secretion. 7 repeat units span residues Asp66–Asn81, Asp82–Asn97, Asp98–Asn113, Asp114–Asn129, Asp130–Asn145, Asp146–Asn161, and Asp162–Asn177. The interval Asp66–Asn177 is 7 X 16 AA tandem repeats of D-N-A-T-S-G-S-T-K-Q-E-S-S-[IV]-A-N. Polar residues-rich tracts occupy residues Asp66 to Lys180 and Asn189 to Gln213. The segment at Asp66 to Gln213 is disordered. Positions 311, 312, and 382 each coordinate sucrose. Asp312 acts as the Nucleophile in catalysis. Ca(2+) is bound at residue Asp460. The sucrose site is built by Arg465 and Asp466. Ca(2+)-binding residues include Gln491, Leu528, Asn530, and Asp562. A sucrose-binding site is contributed by Glu563. Glu565 functions as the Proton donor/acceptor in the catalytic mechanism. Arg583 is a sucrose binding site. Residues Ser743–Gln830 are disordered. Residues Val754–Thr821 are compositionally biased toward polar residues. The LPXTG sorting signal motif lies at Leu841–Gly845. Thr844 carries the post-translational modification Pentaglycyl murein peptidoglycan amidated threonine. The propeptide at Gly845–Asp879 is removed by sortase.

It belongs to the glycosyl hydrolase 68 family.

The protein resides in the secreted. The protein localises to the cell wall. The enzyme catalyses [6)-beta-D-fructofuranosyl-(2-&gt;](n) alpha-D-glucopyranoside + sucrose = [6)-beta-D-fructofuranosyl-(2-&gt;](n+1) alpha-D-glucopyranoside + D-glucose. With respect to regulation, ca(2+) may play an important structural role and promote stability of levansucrase. Functionally, fructosyltransferase that catalyzes the polymerization of the fructose moiety of sucrose to produce levan polymer and the fructo-oligosaccharide (FOS) 1-kestose. Also displays sucrose hydrolase activity. The polypeptide is Levansucrase (Fructilactobacillus sanfranciscensis (Lactobacillus sanfranciscensis)).